We begin with the raw amino-acid sequence, 69 residues long: Protein SlyX homolog (69 aa).

It belongs to the SlyX family.

In Maricaulis maris (strain MCS10) (Caulobacter maris), this protein is Protein SlyX homolog.